The chain runs to 377 residues: DNA-directed RNA polymerase subunit alpha (377 aa).

Positions 1–259 (MSDSSHNLLY…KHFSVFEKMD (259 aa)) are alpha N-terminal domain (alpha-NTD). Residues 276-377 (KDDILHKLVL…KIRLSKNTKG (102 aa)) form an alpha C-terminal domain (alpha-CTD) region.

It belongs to the RNA polymerase alpha chain family. In terms of assembly, homodimer. The RNAP catalytic core consists of 2 alpha, 1 beta, 1 beta' and 1 omega subunit. When a sigma factor is associated with the core the holoenzyme is formed, which can initiate transcription.

The catalysed reaction is RNA(n) + a ribonucleoside 5'-triphosphate = RNA(n+1) + diphosphate. In terms of biological role, DNA-dependent RNA polymerase catalyzes the transcription of DNA into RNA using the four ribonucleoside triphosphates as substrates. In Chlamydia trachomatis serovar A (strain ATCC VR-571B / DSM 19440 / HAR-13), this protein is DNA-directed RNA polymerase subunit alpha.